The sequence spans 1728 residues: Mitochondrial 3' processome subunit 1 (1728 aa).

Residues 1–117 (MRRLILSQTL…AGKMTGSSRF (117 aa)) constitute a mitochondrion transit peptide. Disordered regions lie at residues 45–71 (HRKREGRMYGKPLRPVSDGENGASGDG), 88–156 (ESPV…IGQQ), and 829–863 (GCNRDGGPSRPNTATDSANKKVVSGKQTDNLPKGT).

In terms of assembly, component of the mitochondrial 3' processome (MPsome) complex composed at least of terminal uridylyltransferase KRET1/TUT1, 3'-5' exonuclease DSS1, MPSS1, MPSS2 and MPSS3. Within the complex, interacts with KRET1.

Its subcellular location is the mitochondrion. Functionally, as part of the mitochondrial 3' processome (MPsome), involved in the maturation of guided RNA (gRNA) precursors. In Trypanosoma brucei brucei, this protein is Mitochondrial 3' processome subunit 1.